We begin with the raw amino-acid sequence, 731 residues long: Actin filament-associated protein 1 (731 aa).

Met-1 is subject to N-acetylmethionine. The segment at 56 to 90 (NNLPAPPQMPLPEIPQPWLPPDSGPPPLPTSSLPE) is disordered. Pro residues predominate over residues 59–84 (PAPPQMPLPEIPQPWLPPDSGPPPLP). Positions 70–73 (PQPW) match the SH3-binding motif. The short motif at 93–96 (YEEA) is the SH2-binding 1 element. The disordered stretch occupies residues 118-139 (SSSYESYDEEEEDGKGKKTRHQ). The 97-residue stretch at 152 to 248 (DAKICAFLLR…WLKVIKEAYS (97 aa)) folds into the PH 1 domain. The disordered stretch occupies residues 252–318 (GPVDPECSPP…SKSEAKGTVS (67 aa)). Residues 271-284 (AELEKKLSSERPSS) are compositionally biased toward basic and acidic residues. Residues Ser-283 and Ser-284 each carry the phosphoserine modification. One can recognise a PH 2 domain in the interval 348 to 442 (DVPTCGYLNV…WIGILLAETG (95 aa)). Residues 452–457 (YDYIDV) carry the SH2-binding 2 motif. Residues 513–544 (KNKKPPASSNGVPVKGKAPSSQQKKVETAGGV) form a disordered region. Ser-549 is subject to Phosphoserine. The stretch at 558 to 649 (KNRVEADAKR…VKESLKKALA (92 aa)) forms a coiled coil. An interaction with F-actin region spans residues 595–638 (DLRAAIEVNAGRKTQAALEDKLKRLEEECKQREAERVSLELELT). Residues 658–731 (IEPRSGTSSP…AKEWELKNGT (74 aa)) form a disordered region. 3 positions are modified to phosphoserine: Ser-665, Ser-666, and Ser-669. At Thr-676 the chain carries Phosphothreonine. Residues 678 to 687 (ENSPISSCDT) are compositionally biased toward polar residues. Phosphoserine occurs at positions 680 and 688. The segment covering 721–731 (KAKEWELKNGT) has biased composition (basic and acidic residues).

Monomer and homomultimer. Interacts via its C-terminus with F-actin; probably involving AFAP1 multimers. Interacts with activated SRC SH3-SH2 domains. Interacts via its PH 1 domain with PRKCA, PRKCB and PRKCI. Post-translationally, phosphorylated on tyrosine residues by SRC.

It localises to the cytoplasm. Its subcellular location is the cytoskeleton. The protein resides in the stress fiber. In terms of biological role, can cross-link actin filaments into both network and bundle structures. May modulate changes in actin filament integrity and induce lamellipodia formation. May function as an adapter molecule that links other proteins, such as SRC and PKC to the actin cytoskeleton. The chain is Actin filament-associated protein 1 (Afap1) from Mus musculus (Mouse).